Reading from the N-terminus, the 288-residue chain is Co-chaperone protein DjlA (288 aa).

Over 1–6 (MNFIGK) the chain is Periplasmic. A helical membrane pass occupies residues 7-30 (ILGFIIGYRFGGLFGGIAGLILGH). Over 31 to 288 (IADKKLYELG…DLICKVKGWK (258 aa)) the chain is Cytoplasmic. Residues 222-288 (DAYKVLGVNA…DLICKVKGWK (67 aa)) form the J domain.

In terms of assembly, homodimer.

The protein localises to the cell inner membrane. Its function is as follows. Regulatory DnaK co-chaperone. Direct interaction between DnaK and DjlA is needed for the induction of the wcaABCDE operon, involved in the synthesis of a colanic acid polysaccharide capsule, possibly through activation of the RcsB/RcsC phosphotransfer signaling pathway. The colanic acid capsule may help the bacterium survive conditions outside the host. The sequence is that of Co-chaperone protein DjlA from Mannheimia succiniciproducens (strain KCTC 0769BP / MBEL55E).